A 242-amino-acid polypeptide reads, in one-letter code: N-alpha-acetyltransferase 60 (242 aa).

The Cytoplasmic segment spans residues 1 to 192 (MSEEERPAAL…GGHPPWTVMD (192 aa)). An N-acetyltransferase domain is found at 13–182 (TILRFLCHDD…DAYTYVLYLN (170 aa)). Y38 lines the substrate pocket. Residue Y97 is part of the active site. Substrate is bound at residue L99. Residues 101–103 (LGV) and 109–114 (KQGIGS) contribute to the acetyl-CoA site. H138 is a catalytic residue. Acetyl-CoA-binding positions include N143 and 150 to 153 (YENR). The required for homodimerization stretch occupies residues 162–173 (PYYYSIRGVLQD). Substrate is bound at residue Y165. Positions 193-236 (YLQHLGSALAGFSPCTLPQRIYRQAHTLLRSLLPWSSISAKSGI) form an intramembrane region, helical. Over 237–242 (EYSRTM) the chain is Cytoplasmic.

Belongs to the acetyltransferase family. NAA60 subfamily. Monomer and homodimer; monomer in presence of substrate and homodimer in its absence.

The protein localises to the golgi apparatus membrane. It catalyses the reaction N-terminal L-methionyl-[transmembrane protein] + acetyl-CoA = N-terminal N(alpha)-acetyl-L-methionyl-[transmembrane protein] + CoA + H(+). The enzyme catalyses L-lysyl-[protein] + acetyl-CoA = N(6)-acetyl-L-lysyl-[protein] + CoA + H(+). Functionally, N-alpha-acetyltransferase that specifically mediates the acetylation of N-terminal residues of the transmembrane proteins, with a strong preference for N-termini facing the cytosol. Displays N-terminal acetyltransferase activity towards a range of N-terminal sequences including those starting with Met-Lys, Met-Val, Met-Ala and Met-Met. Required for normal chromosomal segregation during anaphase. May also show histone acetyltransferase activity; such results are however unclear in vivo and would require additional experimental evidences. The sequence is that of N-alpha-acetyltransferase 60 (naa60) from Xenopus tropicalis (Western clawed frog).